The following is a 965-amino-acid chain: Glycine dehydrogenase (decarboxylating) (965 aa).

Residue Lys-711 is modified to N6-(pyridoxal phosphate)lysine.

Belongs to the GcvP family. In terms of assembly, the glycine cleavage system is composed of four proteins: P, T, L and H. Pyridoxal 5'-phosphate is required as a cofactor.

The catalysed reaction is N(6)-[(R)-lipoyl]-L-lysyl-[glycine-cleavage complex H protein] + glycine + H(+) = N(6)-[(R)-S(8)-aminomethyldihydrolipoyl]-L-lysyl-[glycine-cleavage complex H protein] + CO2. The glycine cleavage system catalyzes the degradation of glycine. The P protein binds the alpha-amino group of glycine through its pyridoxal phosphate cofactor; CO(2) is released and the remaining methylamine moiety is then transferred to the lipoamide cofactor of the H protein. This is Glycine dehydrogenase (decarboxylating) from Psychrobacter cryohalolentis (strain ATCC BAA-1226 / DSM 17306 / VKM B-2378 / K5).